The sequence spans 380 residues: MSGPLRKHHPLLKVVNHSVIDLPVPSNISVMWNFGSLLGLCLVSQILTGLFLAMHYTADVNLAFSSVAHICRDVNYGWLLRNLHANGASFMFICLYMHIGRGLYYGSYFYRETWNIGVMLLVLTMATAFLGYVLPWGQMSFWGATVITNLFSAIPYLGPDLVQWLWGGFSVDNATLTRFFAFHFFLPFMIAGLSVVHLLFLHQTGANNPTGLAGDVDKVPFHAYFSYKDVVGFVVLLAGLVFIALFSPNLLTDPENYIPANPLVTPVHIQPEWYFLFAYAILRSIPNKLGGVVALAMSIVVLFFMPFVHSSRQTSHNFRPLAQVLFWLMVVNVLLLTWLGGQPVEYPYIFLGQAASVIYFVNILLLIPIVGYVENKLLFS.

4 helical membrane-spanning segments follow: residues 34-54 (FGSL…FLAM), 78-99 (WLLR…YMHI), 114-134 (WNIG…GYVL), and 179-199 (FFAF…VHLL). Heme b-binding residues include H84 and H98. Residues H183 and H197 each coordinate heme b. Position 202 (H202) interacts with a ubiquinone. The next 4 helical transmembrane spans lie at 227–247 (YKDV…ALFS), 289–309 (LGGV…PFVH), 321–341 (LAQV…WLGG), and 348–368 (YIFL…LLIP).

It belongs to the cytochrome b family. The cytochrome bc1 complex contains 3 respiratory subunits (MT-CYB, CYC1 and UQCRFS1), 2 core proteins (UQCRC1 and UQCRC2) and probably 6 low-molecular weight proteins. The cofactor is heme b.

It is found in the mitochondrion inner membrane. Component of the ubiquinol-cytochrome c reductase complex (complex III or cytochrome b-c1 complex) that is part of the mitochondrial respiratory chain. The b-c1 complex mediates electron transfer from ubiquinol to cytochrome c. Contributes to the generation of a proton gradient across the mitochondrial membrane that is then used for ATP synthesis. The polypeptide is Cytochrome b (MT-CYB) (Branchiostoma floridae (Florida lancelet)).